A 94-amino-acid polypeptide reads, in one-letter code: Small ribosomal subunit protein bS18 (94 aa).

The segment covering 1 to 12 (MSEQNSRPQNSE) has biased composition (low complexity). Residues 1–29 (MSEQNSRPQNSERPQRSRRPQGGPRRRRK) form a disordered region. The segment covering 16-29 (RSRRPQGGPRRRRK) has biased composition (basic residues).

Belongs to the bacterial ribosomal protein bS18 family. As to quaternary structure, part of the 30S ribosomal subunit. Forms a tight heterodimer with protein bS6.

In terms of biological role, binds as a heterodimer with protein bS6 to the central domain of the 16S rRNA, where it helps stabilize the platform of the 30S subunit. The protein is Small ribosomal subunit protein bS18 of Leuconostoc mesenteroides subsp. mesenteroides (strain ATCC 8293 / DSM 20343 / BCRC 11652 / CCM 1803 / JCM 6124 / NCDO 523 / NBRC 100496 / NCIMB 8023 / NCTC 12954 / NRRL B-1118 / 37Y).